An 884-amino-acid chain; its full sequence is Protein P (884 aa).

Positions 1-184 (MHPFSRLFRN…GKPYSWEHRQ (184 aa)) are terminal protein domain (TP). A spacer region spans residues 185–387 (LVQHNGQQHK…YCIHHIVSSL (203 aa)). 2 disordered regions span residues 218 to 241 (PSEPVSVSTRNLSNNISDKSQKST) and 299 to 345 (RNSG…DFSS). Composition is skewed to polar residues over residues 222–241 (VSVSTRNLSNNISDKSQKST) and 323–332 (YSSNSTSQRY). The segment at 388–729 (DDWGPCTVTG…YEELWPVVRQ (342 aa)) is polymerase/reverse transcriptase domain (RT). One can recognise a Reverse transcriptase domain in the interval 398–639 (DVTIKSPRTP…NHLHFMGYVI (242 aa)). The Mg(2+) site is built by D470, D590, and D591.

It belongs to the hepadnaviridae P protein family.

It catalyses the reaction DNA(n) + a 2'-deoxyribonucleoside 5'-triphosphate = DNA(n+1) + diphosphate. The catalysed reaction is Endonucleolytic cleavage to 5'-phosphomonoester.. Its activity is regulated as follows. Activated by host HSP70 and HSP40 in vitro to be able to bind the epsilon loop of the pgRNA. Because deletion of the RNase H region renders the protein partly chaperone-independent, the chaperones may be needed indirectly to relieve occlusion of the RNA-binding site by this domain. Inhibited by several reverse-transcriptase inhibitors: Lamivudine, Adefovir and Entecavir. Functionally, multifunctional enzyme that converts the viral RNA genome into dsDNA in viral cytoplasmic capsids. This enzyme displays a DNA polymerase activity that can copy either DNA or RNA templates, and a ribonuclease H (RNase H) activity that cleaves the RNA strand of RNA-DNA heteroduplexes in a partially processive 3'- to 5'-endonucleasic mode. Neo-synthesized pregenomic RNA (pgRNA) are encapsidated together with the P protein, and reverse-transcribed inside the nucleocapsid. Initiation of reverse-transcription occurs first by binding the epsilon loop on the pgRNA genome, and is initiated by protein priming, thereby the 5'-end of (-)DNA is covalently linked to P protein. Partial (+)DNA is synthesized from the (-)DNA template and generates the relaxed circular DNA (RC-DNA) genome. After budding and infection, the RC-DNA migrates in the nucleus, and is converted into a plasmid-like covalently closed circular DNA (cccDNA). The activity of P protein does not seem to be necessary for cccDNA generation, and is presumably released from (+)DNA by host nuclear DNA repair machinery. This chain is Protein P, found in Marmota monax (Woodchuck).